The chain runs to 443 residues: GTPase Der (443 aa).

EngA-type G domains lie at 3-167 and 176-349; these read PVIA…PEEK and IKIA…QSIQ. GTP contacts are provided by residues 9 to 16, 56 to 60, 119 to 122, 182 to 189, 229 to 233, and 294 to 297; these read GRPNVGKS, DTGGL, NKAD, DTAGI, and NKWD. The KH-like domain maps to 350–434; that stretch reads QELTTGQLTR…PVHIKLKTDP (85 aa).

The protein belongs to the TRAFAC class TrmE-Era-EngA-EngB-Septin-like GTPase superfamily. EngA (Der) GTPase family. Associates with the 50S ribosomal subunit.

GTPase that plays an essential role in the late steps of ribosome biogenesis. The protein is GTPase Der of Coxiella burnetii (strain CbuG_Q212) (Coxiella burnetii (strain Q212)).